We begin with the raw amino-acid sequence, 106 residues long: Urease subunit beta (106 aa).

The protein belongs to the urease beta subunit family. In terms of assembly, heterotrimer of UreA (gamma), UreB (beta) and UreC (alpha) subunits. Three heterotrimers associate to form the active enzyme.

The protein resides in the cytoplasm. The enzyme catalyses urea + 2 H2O + H(+) = hydrogencarbonate + 2 NH4(+). The protein operates within nitrogen metabolism; urea degradation; CO(2) and NH(3) from urea (urease route): step 1/1. The chain is Urease subunit beta from Prochlorococcus marinus (strain MIT 9215).